A 526-amino-acid chain; its full sequence is Flavonoid 3'-monooxygenase CYP75B3 (526 aa).

A helical membrane pass occupies residues 6 to 26 (LPLLLGSLAVSAAVWYLVYFL). Cys461 serves as a coordination point for heme.

The protein belongs to the cytochrome P450 family. Requires heme as cofactor.

The protein localises to the membrane. The catalysed reaction is a 3'-unsubstituted flavone + reduced [NADPH--hemoprotein reductase] + O2 = a 3'-hydroxyflavone + oxidized [NADPH--hemoprotein reductase] + H2O + H(+). The protein operates within secondary metabolite biosynthesis; flavonoid biosynthesis. Catalyzes the 3'-hydroxylation of the flavonoid B-ring to the 3',4'-hydroxylated state. Catalyzes the 3'-hydroxylation of apigenin to generate luteolin. This Oryza sativa subsp. japonica (Rice) protein is Flavonoid 3'-monooxygenase CYP75B3.